Reading from the N-terminus, the 378-residue chain is Succinyl-diaminopimelate desuccinylase (378 aa).

His68 is a binding site for Zn(2+). Asp70 is a catalytic residue. Asp101 is a binding site for Zn(2+). The Proton acceptor role is filled by Glu135. Positions 136, 164, and 350 each coordinate Zn(2+).

It belongs to the peptidase M20A family. DapE subfamily. Homodimer. Requires Zn(2+) as cofactor. The cofactor is Co(2+).

The enzyme catalyses N-succinyl-(2S,6S)-2,6-diaminopimelate + H2O = (2S,6S)-2,6-diaminopimelate + succinate. It functions in the pathway amino-acid biosynthesis; L-lysine biosynthesis via DAP pathway; LL-2,6-diaminopimelate from (S)-tetrahydrodipicolinate (succinylase route): step 3/3. Catalyzes the hydrolysis of N-succinyl-L,L-diaminopimelic acid (SDAP), forming succinate and LL-2,6-diaminopimelate (DAP), an intermediate involved in the bacterial biosynthesis of lysine and meso-diaminopimelic acid, an essential component of bacterial cell walls. The protein is Succinyl-diaminopimelate desuccinylase of Acinetobacter baumannii (strain ATCC 17978 / DSM 105126 / CIP 53.77 / LMG 1025 / NCDC KC755 / 5377).